Here is a 253-residue protein sequence, read N- to C-terminus: Indole-3-glycerol phosphate synthase (253 aa).

This sequence belongs to the TrpC family.

The catalysed reaction is 1-(2-carboxyphenylamino)-1-deoxy-D-ribulose 5-phosphate + H(+) = (1S,2R)-1-C-(indol-3-yl)glycerol 3-phosphate + CO2 + H2O. It functions in the pathway amino-acid biosynthesis; L-tryptophan biosynthesis; L-tryptophan from chorismate: step 4/5. This is Indole-3-glycerol phosphate synthase from Bacillus anthracis (strain A0248).